An 843-amino-acid chain; its full sequence is Protein translocase subunit SecA (843 aa).

Residues Q91, 109–113 (GEGKT), and D498 contribute to the ATP site. Residues 796 to 825 (DFGKAEHVSAEDGKEKAKAEPYVKDEHIGR) are compositionally biased toward basic and acidic residues. The interval 796–833 (DFGKAEHVSAEDGKEKAKAEPYVKDEHIGRNDPCPCGS) is disordered. Zn(2+) contacts are provided by C829, C831, C840, and H841.

This sequence belongs to the SecA family. As to quaternary structure, monomer and homodimer. Part of the essential Sec protein translocation apparatus which comprises SecA, SecYEG and auxiliary proteins SecDF. Other proteins may also be involved. Zn(2+) is required as a cofactor.

It is found in the cell membrane. Its subcellular location is the cytoplasm. It carries out the reaction ATP + H2O + cellular proteinSide 1 = ADP + phosphate + cellular proteinSide 2.. Functionally, part of the Sec protein translocase complex. Interacts with the SecYEG preprotein conducting channel. Has a central role in coupling the hydrolysis of ATP to the transfer of proteins into and across the cell membrane, serving as an ATP-driven molecular motor driving the stepwise translocation of polypeptide chains across the membrane. The protein is Protein translocase subunit SecA of Staphylococcus saprophyticus subsp. saprophyticus (strain ATCC 15305 / DSM 20229 / NCIMB 8711 / NCTC 7292 / S-41).